Consider the following 254-residue polypeptide: MSLNIRPFLAGNWKMNGTRESLGELRAIATGVSSNSGHLFEALICVPATLLSRAYDTLNGESLLLGGQNCHFDDYGPYTGDISAFMLKEAGASHVIIGHSERRTVYQENDAIVCAKVQAAWHAGLVALVCIGETLEERDNNKVMDVLAQQLEGSLPDDTTAENTIIAYEPVWAIGTGNTATSEDIAKVHYFIRDKICSRFGDEGNKIRLLYGGSVKPSSAFELLSIPHVNGALIGGASLKAIDFLTICDVCRKL.

12–14 (NWK) is a binding site for substrate. The active-site Electrophile is His-99. Glu-169 acts as the Proton acceptor in catalysis. Substrate is bound by residues Gly-175, Ser-214, and 235 to 236 (GG).

This sequence belongs to the triosephosphate isomerase family. As to quaternary structure, homodimer.

It is found in the cytoplasm. The catalysed reaction is D-glyceraldehyde 3-phosphate = dihydroxyacetone phosphate. The protein operates within carbohydrate biosynthesis; gluconeogenesis. It functions in the pathway carbohydrate degradation; glycolysis; D-glyceraldehyde 3-phosphate from glycerone phosphate: step 1/1. Its function is as follows. Involved in the gluconeogenesis. Catalyzes stereospecifically the conversion of dihydroxyacetone phosphate (DHAP) to D-glyceraldehyde-3-phosphate (G3P). The polypeptide is Triosephosphate isomerase (Bartonella tribocorum (strain CIP 105476 / IBS 506)).